We begin with the raw amino-acid sequence, 273 residues long: NAD-dependent protein deacylase (273 aa).

Residues 20–272 (RERLRQRIFF…PEFVEKLLKG (253 aa)) enclose the Deacetylase sirtuin-type domain. 48–67 (GAGISAESGIRTFRAADGLW) contacts NAD(+). The substrate site is built by Tyr-92 and Arg-95. Position 129 to 132 (129 to 132 (QNID)) interacts with NAD(+). Residue His-147 is the Proton acceptor of the active site. Residues Cys-155 and Cys-174 each coordinate Zn(2+). Residues 214–216 (GTS), 240–242 (NLE), and Ala-258 each bind NAD(+).

This sequence belongs to the sirtuin family. Class III subfamily. It depends on Zn(2+) as a cofactor.

Its subcellular location is the cytoplasm. The enzyme catalyses N(6)-acetyl-L-lysyl-[protein] + NAD(+) + H2O = 2''-O-acetyl-ADP-D-ribose + nicotinamide + L-lysyl-[protein]. It catalyses the reaction N(6)-succinyl-L-lysyl-[protein] + NAD(+) + H2O = 2''-O-succinyl-ADP-D-ribose + nicotinamide + L-lysyl-[protein]. It carries out the reaction N(6)-(2-hydroxyisobutanoyl)-L-lysyl-[protein] + NAD(+) + H2O = 2''-O-(2-hydroxyisobutanoyl)-ADP-D-ribose + nicotinamide + L-lysyl-[protein]. Functionally, NAD-dependent lysine deacetylase that specifically removes acetyl groups on target proteins. Also acts as a protein-lysine deacylase by mediating protein desuccinylation and de-2-hydroxyisobutyrylation. Modulates the activities of several proteins which are inactive in their acylated form. This chain is NAD-dependent protein deacylase, found in Escherichia coli O6:H1 (strain CFT073 / ATCC 700928 / UPEC).